Consider the following 563-residue polypeptide: Group II intron-interrupted relaxase LtrB (563 aa).

The active site involves tyrosine 44. Positions 159 and 161 each coordinate Mg(2+).

This sequence belongs to the mobilization (MOB) protein type 1 family. Mg(2+) serves as cofactor. Requires Mn(2+) as cofactor.

Mediates initiation of conjugal transfer possibly by introducing a single-stranded nick at the potential origin of transfer. This is Group II intron-interrupted relaxase LtrB (ltrBE1) from Lactococcus lactis subsp. cremoris (strain MG1363).